We begin with the raw amino-acid sequence, 770 residues long: Metallothionein expression activator (770 aa).

Residues 77-97 (LVPSPKTGDGSSDKKNIDRTW) are disordered. Residues Ser80, Ser122, Ser247, Ser249, and Ser253 each carry the phosphoserine modification. Thr259 is subject to Phosphothreonine. A disordered region spans residues 286 to 323 (PPPTLISPRMSNTSINGSPSRKYHRQRYPNKSPESNGL). The segment covering 294–304 (RMSNTSINGSP) has biased composition (polar residues). 3 positions are modified to phosphoserine: Ser385, Ser392, and Ser483. Phosphothreonine occurs at positions 486 and 501. Ser564 bears the Phosphoserine mark. 2 consecutive C2H2-type zinc fingers follow at residues 603 to 627 (FECL…IQTH) and 633 to 657 (YSCD…KISH). Residues 662-685 (YICPCGKRFNREDALMVHRSRMIC) form a C2H2-type 3; atypical zinc finger. Positions 699–770 (LTSPKKSLLD…RTLSNETDAL (72 aa)) are disordered. Over residues 705–745 (SLLDSPHDTSPVKETIARDKDGSVLMKMEEQLRDDMRKHGL) the composition is skewed to basic and acidic residues. 2 positions are modified to phosphoserine: Ser709 and Ser714. Polar residues predominate over residues 754 to 770 (AHEQNSNRTLSNETDAL).

The protein resides in the nucleus. Functionally, plays a role in regulating basal-level expression of CUP1. Activates EGT2 transcription in the absence of SWI5. The chain is Metallothionein expression activator (ACE2) from Saccharomyces cerevisiae (strain ATCC 204508 / S288c) (Baker's yeast).